Reading from the N-terminus, the 322-residue chain is Beta-ketoacyl-[acyl-carrier-protein] synthase III (322 aa).

Residues C113 and H249 contribute to the active site. An ACP-binding region spans residues 250–254 (QANIR). N279 is a catalytic residue.

Belongs to the thiolase-like superfamily. FabH family. As to quaternary structure, homodimer.

The protein resides in the cytoplasm. The catalysed reaction is malonyl-[ACP] + acetyl-CoA + H(+) = 3-oxobutanoyl-[ACP] + CO2 + CoA. Its pathway is lipid metabolism; fatty acid biosynthesis. Functionally, catalyzes the condensation reaction of fatty acid synthesis by the addition to an acyl acceptor of two carbons from malonyl-ACP. Catalyzes the first condensation reaction which initiates fatty acid synthesis and may therefore play a role in governing the total rate of fatty acid production. Possesses both acetoacetyl-ACP synthase and acetyl transacylase activities. Its substrate specificity determines the biosynthesis of branched-chain and/or straight-chain of fatty acids. In Thioalkalivibrio sulfidiphilus (strain HL-EbGR7), this protein is Beta-ketoacyl-[acyl-carrier-protein] synthase III.